We begin with the raw amino-acid sequence, 168 residues long: NADH-quinone oxidoreductase subunit B (168 aa).

[4Fe-4S] cluster contacts are provided by Cys49, Cys50, Cys114, and Cys144.

Belongs to the complex I 20 kDa subunit family. As to quaternary structure, NDH-1 is composed of 14 different subunits. Subunits NuoB, C, D, E, F, and G constitute the peripheral sector of the complex. [4Fe-4S] cluster serves as cofactor.

It localises to the cell membrane. It catalyses the reaction a quinone + NADH + 5 H(+)(in) = a quinol + NAD(+) + 4 H(+)(out). In terms of biological role, NDH-1 shuttles electrons from NADH, via FMN and iron-sulfur (Fe-S) centers, to quinones in the respiratory chain. Couples the redox reaction to proton translocation (for every two electrons transferred, four hydrogen ions are translocated across the cytoplasmic membrane), and thus conserves the redox energy in a proton gradient. This chain is NADH-quinone oxidoreductase subunit B, found in Wolbachia sp. subsp. Brugia malayi (strain TRS).